The following is a 522-amino-acid chain: Leucine-rich repeat transmembrane neuronal protein 1 (522 aa).

An N-terminal signal peptide occupies residues 1–34 (MDFLLLGLCLHWLLRRPSGVVLCLLGACFQMLPA). The region spanning 35–63 (APSGCPGQCRCEGRLLYCEALNLTEAPHN) is the LRRNT domain. Residues 35–427 (APSGCPGQCR…HAENAVQIHK (393 aa)) lie on the Extracellular side of the membrane. N-linked (GlcNAc...) asparagine glycosylation is found at asparagine 56 and asparagine 63. 10 LRR repeats span residues 64–87 (LSGL…QFTG), 89–111 (MQLT…AFQK), 112–135 (LRRV…TFRP), 136–159 (MPNL…LFHG), 161–183 (RKLT…IFQD), 184–207 (CRSL…SFAG), 209–231 (FKLT…HFPR), 233–255 (ISLH…LDWV), 256–278 (WNLE…VFET), and 280–302 (PYLQ…ILNS). Asparagine 130 carries an N-linked (GlcNAc...) asparagine glycan. The LRRCT domain occupies 314–365 (NLWDCGRNVCALASWLSNFQGRYDANLQCASPEYAQGEDVLDAVYAFHLCED). The N-linked (GlcNAc...) asparagine glycan is linked to asparagine 381. The chain crosses the membrane as a helical span at residues 428 to 448 (VVTGTMALIFSFLIVVLVLYV). Residues 449–522 (SWKCFPASLR…HQQPARECEV (74 aa)) are Cytoplasmic-facing.

The protein belongs to the LRRTM family. As to expression, expressed predominantly in the nervous system by postmitotic neurons, but also in some non-neuronal tissues. In adult brain expression is most prominent in the forebraain, particularly in the thalamus and in the cortical areas including hippocampus, piriform and posterior cingulate.

Its subcellular location is the cell membrane. It is found in the postsynaptic cell membrane. In terms of biological role, exhibits strong synaptogenic activity, restricted to excitatory presynaptic differentiation, acting at both pre- and postsynaptic level. The sequence is that of Leucine-rich repeat transmembrane neuronal protein 1 (Lrrtm1) from Mus musculus (Mouse).